Here is a 133-residue protein sequence, read N- to C-terminus: Small ribosomal subunit protein uS9 (133 aa).

The interval 101–133 (MKPKGLLTRDPREVERKKYGLKKARRAPQFSKR) is disordered. Residues 107-118 (LTRDPREVERKK) are compositionally biased toward basic and acidic residues. Residues 119-133 (YGLKKARRAPQFSKR) are compositionally biased toward basic residues.

It belongs to the universal ribosomal protein uS9 family.

The polypeptide is Small ribosomal subunit protein uS9 (Deinococcus radiodurans (strain ATCC 13939 / DSM 20539 / JCM 16871 / CCUG 27074 / LMG 4051 / NBRC 15346 / NCIMB 9279 / VKM B-1422 / R1)).